Here is a 130-residue protein sequence, read N- to C-terminus: Small ribosomal subunit protein uS11 (130 aa).

This sequence belongs to the universal ribosomal protein uS11 family. As to quaternary structure, part of the 30S ribosomal subunit. Interacts with proteins S7 and S18. Binds to IF-3.

Its function is as follows. Located on the platform of the 30S subunit, it bridges several disparate RNA helices of the 16S rRNA. Forms part of the Shine-Dalgarno cleft in the 70S ribosome. The chain is Small ribosomal subunit protein uS11 from Prochlorococcus marinus (strain NATL2A).